The sequence spans 554 residues: Solute carrier family 22 member 1 (554 aa).

Over M1–T21 the chain is Cytoplasmic. Residues F22 to L42 form a helical membrane-spanning segment. Residues G43–D149 are Extracellular-facing. Residue N71 is glycosylated (N-linked (GlcNAc...) asparagine). The chain crosses the membrane as a helical span at residues L150 to A170. Residues D171 to K176 lie on the Cytoplasmic side of the membrane. Residues L177–P197 traverse the membrane as a helical segment. At D198–R206 the chain is on the extracellular side. A helical transmembrane segment spans residues L207 to G229. At S230–A237 the chain is on the cytoplasmic side. A helical transmembrane segment spans residues I238 to I258. The Extracellular segment spans residues P259–R262. A helical membrane pass occupies residues W263 to P283. A Proline-rich sequence motif is present at residues P283–R287. Residues E284 to T347 are Cytoplasmic-facing. Position 333 is a phosphoserine (S333). Residues F348–M368 form a helical membrane-spanning segment. Residues G369 to N374 lie on the Extracellular side of the membrane. Residues V375 to V395 form a helical membrane-spanning segment. Over T396–R402 the chain is Cytoplasmic. A helical transmembrane segment spans residues I403–V423. At P424–T431 the chain is on the extracellular side. A helical membrane pass occupies residues I432–V452. The Cytoplasmic portion of the chain corresponds to N453–L464. A helical membrane pass occupies residues G465–F485. Residues R486–Q492 lie on the Extracellular side of the membrane. The chain crosses the membrane as a helical span at residues P493 to L513. The Cytoplasmic segment spans residues P514 to P554.

The protein belongs to the major facilitator (TC 2.A.1) superfamily. Organic cation transporter (TC 2.A.1.19) family. In terms of processing, phosphorylated. In terms of tissue distribution, expressed in kidney, liver and intestine.

It localises to the basolateral cell membrane. It is found in the apical cell membrane. The protein resides in the lateral cell membrane. The protein localises to the basal cell membrane. The catalysed reaction is 1-methylnicotinamide(out) = 1-methylnicotinamide(in). The enzyme catalyses dopamine(out) = dopamine(in). It catalyses the reaction serotonin(out) = serotonin(in). It carries out the reaction (R)-adrenaline(out) = (R)-adrenaline(in). The catalysed reaction is (R)-noradrenaline(out) = (R)-noradrenaline(in). The enzyme catalyses histamine(out) = histamine(in). It catalyses the reaction guanidine(out) = guanidine(in). It carries out the reaction choline(out) = choline(in). The catalysed reaction is acetylcholine(in) = acetylcholine(out). The enzyme catalyses thiamine(in) = thiamine(out). It catalyses the reaction spermidine(in) = spermidine(out). It carries out the reaction agmatine(out) = agmatine(in). The catalysed reaction is putrescine(out) = putrescine(in). The enzyme catalyses (R)-carnitine(in) = (R)-carnitine(out). It catalyses the reaction O-isobutanoyl-(R)-carnitine(in) = O-isobutanoyl-(R)-carnitine(out). It carries out the reaction O-acetyl-(R)-carnitine(in) = O-acetyl-(R)-carnitine(out). The catalysed reaction is O-3-hydroxybutanoyl-(R)-carnitine(in) = O-3-hydroxybutanoyl-(R)-carnitine(out). The enzyme catalyses O-propanoyl-(R)-carnitine(in) = O-propanoyl-(R)-carnitine(out). It catalyses the reaction O-butanoyl-(R)-carnitine(in) = O-butanoyl-(R)-carnitine(out). It carries out the reaction O-2-methylbutanoyl-(R)-carnitine(in) = O-2-methylbutanoyl-(R)-carnitine(out). The catalysed reaction is O-3-methylbutanoyl-(R)-carnitine(in) = O-3-methylbutanoyl-(R)-carnitine(out). The enzyme catalyses O-hexanoyl-(R)-carnitine(in) = O-hexanoyl-(R)-carnitine(out). It catalyses the reaction L-histidyl-L-proline diketopiperazine(in) = L-histidyl-L-proline diketopiperazine(out). It carries out the reaction (R)-salsolinol(in) = (R)-salsolinol(out). The catalysed reaction is prostaglandin F2alpha(out) = prostaglandin F2alpha(in). The enzyme catalyses prostaglandin E2(out) = prostaglandin E2(in). With respect to regulation, phosphorylation of the transporter leads to changes in its substrate affinity, resulting in a regulation of the transport activity. In contrast with rat ortholog, ASP uptake is inhibited by protein kinase A (PKA) and C (PKC) activation. ASP uptake is also endogenously activated by calmodulin, the calmodulin-dependent kinase II and LCK tyrosine kinase. Inhibited by cGMP, most likely through a cGMP-binding protein that interacts with OCT1. In terms of biological role, electrogenic voltage-dependent transporter that mediates the transport of a variety of organic cations such as endogenous bioactive amines, cationic drugs and xenobiotics. Functions as a pH- and Na(+)-independent, bidirectional transporter. Cation cellular uptake or release is driven by the electrochemical potential (i.e. membrane potential and concentration gradient) and substrate selectivity. Hydrophobicity is a major requirement for recognition in polyvalent substrates and inhibitors. Primarily expressed in the basolateral membrane of hepatocytes and proximal tubules and involved in the uptake and disposition of cationic compounds from the blood by hepatic and renal clearance. Most likely functions as an uptake carrier in enterocytes contributing to the intestinal elimination of organic cations from the systemic circulation. Transports endogenous monoamines such as N-1-methylnicotinamide (NMN), guanidine, neurotransmitters dopamine, serotonin, noradrenaline, adrenaline and histamine, and quaternary ammonium compound such as choline. Also transports natural polyamines such as spermidine, agmatine and putrescine at low affinity, but relatively high turnover. Involved in the hepatic and intestinal uptake of the vitamin B1/thiamine, hence regulating hepatic lipid and energy metabolism. Contributes to the influx and efflux of fatty acid carriers carnitines and acylcarnitines across the basolateral membrane of hepatocytes, from the liver to the systemic circulation and inversely and may be involved in regulating the systemic availability of hepatic acylcarnitines. Also capable of transporting non-amine endogenous compounds such as prostaglandin E2 (PGE2) and prostaglandin F2-alpha (PGF2-alpha). May contribute to the transport of cationic compounds in testes across the blood-testis-barrier. Also mediates the uptake of xenobiotics tributylmethylammonium (TBuMA), quinidine, N-methyl-quinine (NMQ), N-methyl-quinidine (NMQD) N-(4,4-azo-n-pentyl)-quinuclidine (APQ), azidoprocainamide methoiodide (AMP), N-(4,4-azo-n-pentyl)-21-deoxyajmalinium (APDA) and 4-(4-(dimethylamino)styryl)-N-methylpyridinium (ASP). This Oryctolagus cuniculus (Rabbit) protein is Solute carrier family 22 member 1 (SLC22A1).